Consider the following 713-residue polypeptide: Major surface-labeled trophozoite antigen 417 (713 aa).

Residues 1–17 (MFGRFLLAIVILQLART) form the signal peptide. The Extracellular segment spans residues 18–679 (ACTQEADDGK…KDSGSTNKSG (662 aa)). 2 N-linked (GlcNAc...) asparagine glycosylation sites follow: N289 and N676. The helical transmembrane segment at 680-708 (LSTGAIAGISVAVIVVVGGLIGFLCWWFL) threads the bilayer. Over 709–713 (CRGKA) the chain is Cytoplasmic.

It belongs to the Giardia variant surface protein family.

It is found in the cell membrane. The polypeptide is Major surface-labeled trophozoite antigen 417 (TSA 417) (Giardia intestinalis (Giardia lamblia)).